A 109-amino-acid chain; its full sequence is Nucleoid-associated protein Swoo_1794 (109 aa).

The disordered stretch occupies residues Q88 to F109.

It belongs to the YbaB/EbfC family. In terms of assembly, homodimer.

It is found in the cytoplasm. The protein localises to the nucleoid. Functionally, binds to DNA and alters its conformation. May be involved in regulation of gene expression, nucleoid organization and DNA protection. This chain is Nucleoid-associated protein Swoo_1794, found in Shewanella woodyi (strain ATCC 51908 / MS32).